The sequence spans 499 residues: MSNLIILPMLLPFVCALILVFTKNKNRISKILSITTMIVNTMISIALLIYVVNHKPITLDFGGWKAPFGIQFLGDSLSLLMVSVSSFVVTLIMAYGFGRGEKRVNRFHLPTFILLLTVGVIGSFLTSDLFNLYVMFEIMLLASFVLVTLGQSVEQLRAAIVYVVLNILGSWLLLLGIGMLYKTVGTLNFSHLAMRLNHMENNQTITMISLVFLVAFSSKAALVIFMWLPKAYAVLNTELAALFAALMTKVGAYALIRFFTLLFDHHPSVTHTLLVFMACITMIIGAFGVIAYKDIKKIAAYQVILSIGFIILGLGSHTISGVNGAIFYLANDIIVKTLLFFVIGSLVYMSGYRNYQYLSGLAKREPFFGVAFVVVIFAIGGVPPFSGFPGKVLIFQGAITNGNYIGLALMIVTSLIAMYSLFRVMFIMYFGDADGEQVQFRPLPIYRKGLLSVLVVVVLAMGIAAPVVLKVTEDATNLNMKEDVFQKNVNTHLKEVNHK.

14 consecutive transmembrane segments (helical) span residues Met1–Phe21, Ile31–Val51, Leu77–Phe97, Phe107–Ser127, Leu129–Leu149, Ile160–Leu180, Ile208–Leu228, Leu239–Phe259, Thr272–Tyr292, Ile307–Phe327, Leu329–Met349, Phe367–Gly387, Gly402–Phe422, and Gly449–Leu469.

Belongs to the CPA3 antiporters (TC 2.A.63) subunit D family. In terms of assembly, may form a heterooligomeric complex that consists of seven subunits: mnhA2, mnhB2, mnhC2, mnhD2, mnhE2, mnhF2 and mnhG2.

The protein resides in the cell membrane. This is Putative antiporter subunit mnhD2 (mnhD2) from Staphylococcus epidermidis (strain ATCC 35984 / DSM 28319 / BCRC 17069 / CCUG 31568 / BM 3577 / RP62A).